The sequence spans 131 residues: Photosystem II extrinsic protein U (131 aa).

The first 28 residues, 1 to 28 (MKFISRLLVACSLLIGLMGFLGADLAQA), serve as a signal peptide directing secretion. A propeptide spanning residues 29–36 (LTPNPILA) is cleaved from the precursor.

Belongs to the PsbU family. In terms of assembly, PSII is composed of 1 copy each of membrane proteins PsbA, PsbB, PsbC, PsbD, PsbE, PsbF, PsbH, PsbI, PsbJ, PsbK, PsbL, PsbM, PsbT, PsbX, PsbY, PsbZ, Psb30/Ycf12, peripheral proteins PsbO, CyanoQ (PsbQ), PsbU, PsbV and a large number of cofactors. It forms dimeric complexes.

The protein localises to the cellular thylakoid membrane. Functionally, one of the extrinsic, lumenal subunits of photosystem II (PSII). PSII is a light-driven water plastoquinone oxidoreductase, using light energy to abstract electrons from H(2)O, generating a proton gradient subsequently used for ATP formation. The extrinsic proteins stabilize the structure of photosystem II oxygen-evolving complex (OEC), the ion environment of oxygen evolution and protect the OEC against heat-induced inactivation. May modulate the Cl(-) requirement for oxygen evolution. The protein is Photosystem II extrinsic protein U of Synechocystis sp. (strain ATCC 27184 / PCC 6803 / Kazusa).